The primary structure comprises 325 residues: Tagatose 1,6-diphosphate aldolase 1 (325 aa).

This sequence belongs to the aldolase LacD family.

The enzyme catalyses D-tagatofuranose 1,6-bisphosphate = D-glyceraldehyde 3-phosphate + dihydroxyacetone phosphate. Its pathway is carbohydrate metabolism; D-tagatose 6-phosphate degradation; D-glyceraldehyde 3-phosphate and glycerone phosphate from D-tagatose 6-phosphate: step 2/2. The protein is Tagatose 1,6-diphosphate aldolase 1 (lacD1) of Enterococcus faecalis (strain ATCC 700802 / V583).